The following is a 155-amino-acid chain: Endoribonuclease YbeY (155 aa).

3 residues coordinate Zn(2+): histidine 114, histidine 118, and histidine 124.

This sequence belongs to the endoribonuclease YbeY family. Zn(2+) is required as a cofactor.

The protein localises to the cytoplasm. Single strand-specific metallo-endoribonuclease involved in late-stage 70S ribosome quality control and in maturation of the 3' terminus of the 16S rRNA. This chain is Endoribonuclease YbeY, found in Cronobacter sakazakii (strain ATCC BAA-894) (Enterobacter sakazakii).